We begin with the raw amino-acid sequence, 331 residues long: MKKRLAVLLVIVLTITFSFSVTTRIKDIAFFRGARDNQLFGIGLVVGLNGTGDSGNVNSPLLLEMMKKFGVQVSENDLKSKNTALVMVLADIPPFAKEGMRIDCVVASIADAKSLAGGYLLQTPLYGADGKVYAVAQGSVIIGGEDVKLSSNLQKRYRVVGYLPEGAIVERDIPSDMLDGDSVTILLRQPDITTAARVARAINEKFEMDLAKAIDPSAIKLTVPNAFQDDLITFLSLVEEIEVQPDVPARIVVNERTGTVLFGGDVKLSDFVISYGNFTISVTGGKIGDKDATISNLVSALKAAGATPQDIIAILQVIYESGYITGELIIM.

An N-terminal signal peptide occupies residues 1 to 25 (MKKRLAVLLVIVLTITFSFSVTTRI).

Belongs to the FlgI family. In terms of assembly, the basal body constitutes a major portion of the flagellar organelle and consists of four rings (L,P,S, and M) mounted on a central rod.

It localises to the periplasm. The protein localises to the bacterial flagellum basal body. Assembles around the rod to form the L-ring and probably protects the motor/basal body from shearing forces during rotation. This Thermotoga petrophila (strain ATCC BAA-488 / DSM 13995 / JCM 10881 / RKU-1) protein is Flagellar P-ring protein.